Consider the following 737-residue polypeptide: tRNA (guanine(27)-N(2))-dimethyltransferase (737 aa).

The segment covering 1–10 (MENMAEEELL) has biased composition (acidic residues). Positions 1–65 (MENMAEEELL…ASAPVPAPAL (65 aa)) are disordered. Residues 17 to 49 (VVQVPVPTPTPDSARVPAPAPDSAPVSASTPAP) are compositionally biased toward low complexity. The residue at position 24 (threonine 24) is a Phosphothreonine. A compositionally biased stretch (pro residues) spans 50 to 62 (ASAPTPASAPVPA). Serine 72 carries the phosphoserine modification. The Nucleolar localization signal motif lies at 141 to 145 (HKLHR). The C2H2-type zinc finger occupies 190–212 (YHCIICSATITRRTDMLGHVRRH). The Trm1 methyltransferase domain occupies 233–692 (EILKEADTDV…APLMQFKSIL (460 aa)). Residues arginine 266, aspartate 313, aspartate 363, and alanine 364 each contribute to the S-adenosyl-L-methionine site. Residues cysteine 494, cysteine 497, cysteine 519, and cysteine 521 each contribute to the Zn(2+) site. Lysine 589 participates in a covalent cross-link: Glycyl lysine isopeptide (Lys-Gly) (interchain with G-Cter in SUMO2). Position 616 is a phosphoserine (serine 616).

Belongs to the class I-like SAM-binding methyltransferase superfamily. Trm1 family.

The protein localises to the nucleus. The protein resides in the nucleolus. The enzyme catalyses guanosine(27) in tRNA(Tyr) + 2 S-adenosyl-L-methionine = N(2)-dimethylguanosine(27) in tRNA(Tyr) + 2 S-adenosyl-L-homocysteine + 2 H(+). Specifically dimethylates a single guanine residue at position 27 of tRNA(Tyr) using S-adenosyl-L-methionine as donor of the methyl groups. Dimethylation at position 27 of tRNA(Tyr) is required for efficient translation of tyrosine codons. Also required to maintain 3-(3-amino-3-carboxypropyl)uridine (acp3U) in the D-loop of several cytoplasmic tRNAs. This chain is tRNA (guanine(27)-N(2))-dimethyltransferase (TRMT1L), found in Bos taurus (Bovine).